Here is a 424-residue protein sequence, read N- to C-terminus: Alkaline nuclease (424 aa).

This sequence belongs to the baculo-herpesviridae alkaline nuclease family. As to quaternary structure, interacts with LEF-3.

The protein resides in the host nucleus. In terms of biological role, may play a role in maturation and encapsidation of viral replicated genome, by promoting DNA homologous recombination. Exhibits endonuclease and 5'-&gt;3' exonuclease activities. The endonuclease activity displays a specificity for ssDNA in vitro. This Orgyia pseudotsugata (Douglas-fir tussock moth) protein is Alkaline nuclease (ALK-EXO).